The chain runs to 617 residues: MPELRSRTVTHGRNMAGARALMRASGVPGADIGRKPIIAVANSFTEFVPGHTHLQPVGRIVSEAITAAGGIAREFNTIAVDDGIAMGHGGMLYSLPSRDLIADSVEYMVEAHCADALICISNCDKITPGMLMAALRLNIPTVFVSGGPMESGRATLVDGTVRTLDLVDAISDAVNDKISDEDILRIEENACPTCGSCSGMFTANSMNCLTEAIGLSLPGNGSVLATHTARKGLYEDAARTVVDITRRYYEQDDESVLPRNIATHAAFENAMALDIAMGGSTNTILHLLAAAQEAGVPFGLDEINEVSRRVPCLAKVAPNVAKDRTYYMEDVHRAGGIPALLGELHRAGLLNEDVHSVHSPSLSDWLKTWDVRAGSPSPEAIELWHAAPGCVRSSEAFSQSERWEALDEDAEGGCIRSAEHAYSKDGGLAVLKGNLAVDGCVVKTAGVDESIWTFEGPAVVCESQDEAVDKILRKEITHGDVVVIRYEGPKGGPGMQEMLYPTSFLKGRGLGKTCALITDGRFSGGTSGLSIGHASPEAASGGTIALVQDGDRIRIDIPNRTIDLLVDEAELSRRDQALNGVYAPVNRERKVSAALRAYAAMATSADKGAVRDVSKLG.

Aspartate 82 contacts Mg(2+). Cysteine 123 is a [2Fe-2S] cluster binding site. Mg(2+)-binding residues include aspartate 124 and lysine 125. Position 125 is an N6-carboxylysine (lysine 125). Cysteine 197 contacts [2Fe-2S] cluster. Glutamate 497 provides a ligand contact to Mg(2+). Serine 523 acts as the Proton acceptor in catalysis.

It belongs to the IlvD/Edd family. As to quaternary structure, homodimer. It depends on [2Fe-2S] cluster as a cofactor. The cofactor is Mg(2+).

It carries out the reaction (2R)-2,3-dihydroxy-3-methylbutanoate = 3-methyl-2-oxobutanoate + H2O. The catalysed reaction is (2R,3R)-2,3-dihydroxy-3-methylpentanoate = (S)-3-methyl-2-oxopentanoate + H2O. It functions in the pathway amino-acid biosynthesis; L-isoleucine biosynthesis; L-isoleucine from 2-oxobutanoate: step 3/4. It participates in amino-acid biosynthesis; L-valine biosynthesis; L-valine from pyruvate: step 3/4. Functions in the biosynthesis of branched-chain amino acids. Catalyzes the dehydration of (2R,3R)-2,3-dihydroxy-3-methylpentanoate (2,3-dihydroxy-3-methylvalerate) into 2-oxo-3-methylpentanoate (2-oxo-3-methylvalerate) and of (2R)-2,3-dihydroxy-3-methylbutanoate (2,3-dihydroxyisovalerate) into 2-oxo-3-methylbutanoate (2-oxoisovalerate), the penultimate precursor to L-isoleucine and L-valine, respectively. The polypeptide is Dihydroxy-acid dehydratase (Streptomyces avermitilis (strain ATCC 31267 / DSM 46492 / JCM 5070 / NBRC 14893 / NCIMB 12804 / NRRL 8165 / MA-4680)).